A 146-amino-acid chain; its full sequence is Ribonuclease H (146 aa).

An RNase H type-1 domain is found at 1 to 143 (MKKRVTIYTD…CDELARQAIK (143 aa)). Residues D10, E48, D70, and D135 each coordinate Mg(2+).

Belongs to the RNase H family. Monomer. The cofactor is Mg(2+).

The protein resides in the cytoplasm. The enzyme catalyses Endonucleolytic cleavage to 5'-phosphomonoester.. Endonuclease that specifically degrades the RNA of RNA-DNA hybrids. This is Ribonuclease H from Chlorobium limicola (strain DSM 245 / NBRC 103803 / 6330).